The sequence spans 335 residues: Glyceraldehyde-3-phosphate dehydrogenase (335 aa).

Residues 12–13 (RI), D34, and R79 contribute to the NAD(+) site. D-glyceraldehyde 3-phosphate is bound by residues 150-152 (SCT), T181, 210-211 (TG), and R233. C151 (nucleophile) is an active-site residue. N315 lines the NAD(+) pocket.

The protein belongs to the glyceraldehyde-3-phosphate dehydrogenase family. Homotetramer.

The protein resides in the cytoplasm. It carries out the reaction D-glyceraldehyde 3-phosphate + phosphate + NAD(+) = (2R)-3-phospho-glyceroyl phosphate + NADH + H(+). It participates in carbohydrate degradation; glycolysis; pyruvate from D-glyceraldehyde 3-phosphate: step 1/5. This Ogataea parapolymorpha (strain ATCC 26012 / BCRC 20466 / JCM 22074 / NRRL Y-7560 / DL-1) (Yeast) protein is Glyceraldehyde-3-phosphate dehydrogenase (GPD).